The chain runs to 714 residues: RanBP-type and C3HC4-type zinc finger-containing protein 1 (714 aa).

Disordered stretches follow at residues 1–23 (MSLS…SHLG) and 152–172 (SSST…SKAP). Positions 14 to 23 (PAQSSSSHLG) are enriched in polar residues. Residues 225–301 (LAVVVEDASS…TAFLYLISAR (77 aa)) form the Ubiquitin-like domain. The segment at 394 to 426 (RTSIQPGWACPTCTYINKPTRPGCEMCSADRPE) adopts a RanBP2-type zinc-finger fold. A TRIAD supradomain region spans residues 482–710 (ERVECRICYV…VNKQRCHPKC (229 aa)). Zn(2+) contacts are provided by Cys-486, Cys-489, Cys-504, His-506, Cys-509, Cys-512, Cys-527, Cys-536, Cys-575, Cys-580, Cys-595, Cys-598, Cys-603, Cys-606, His-610, Cys-615, Cys-651, and Cys-654. An RING-type 1 zinc finger spans residues 486 to 536 (CRICYVELESGEGVLLRECLHCFCKECLRSVILMSEDPQVACPYRDESYAC). The segment at 555 to 615 (QHWLQRGLSV…CKAIHEGMNC (61 aa)) adopts an IBR-type zinc-finger fold. The RING-type 2; atypical zinc-finger motif lies at 651 to 680 (CPQCGIIVQKKEGCDWLRCTVCHTEICWVT). Residue Cys-664 is part of the active site. Zn(2+) contacts are provided by Cys-669 and Cys-672.

Belongs to the RBR family. As to quaternary structure, component of the LUBAC complex (linear ubiquitin chain assembly complex).

It carries out the reaction [E2 ubiquitin-conjugating enzyme]-S-ubiquitinyl-L-cysteine + [acceptor protein]-L-lysine = [E2 ubiquitin-conjugating enzyme]-L-cysteine + [acceptor protein]-N(6)-ubiquitinyl-L-lysine.. It functions in the pathway protein modification; protein ubiquitination. In terms of biological role, component of the LUBAC complex which conjugates linear ('Met-1'-linked) polyubiquitin chains to substrates and plays a key role in NF-kappa-B activation and regulation of inflammation. LUBAC conjugates linear polyubiquitin to ikbkg and RIPK1 and is involved in activation of the canonical NF-kappa-B and the JNK signaling pathways. Linear ubiquitination mediated by the LUBAC complex interferes with TNF-induced cell death and thereby prevents inflammation. LUBAC is recruited to the TNF-R1 signaling complex (TNF-RSC) to conjugate linear polyubiquitin to ikbkg and possibly other components contributing to the stability of the complex. The LUBAC complex is also involved in innate immunity by conjugating linear polyubiquitin chains at the surface of bacteria invading the cytosol to form the ubiquitin coat surrounding bacteria. LUBAC is not able to initiate formation of the bacterial ubiquitin coat, and can only promote formation of linear polyubiquitins on pre-existing ubiquitin. The bacterial ubiquitin coat acts as an 'eat-me' signal for xenophagy and promotes NF-kappa-B activation. Binds polyubiquitin of different linkage types. The protein is RanBP-type and C3HC4-type zinc finger-containing protein 1 (rbck1) of Danio rerio (Zebrafish).